The sequence spans 203 residues: Small ribosomal subunit protein uS4 (203 aa).

Residues 93–156 form the S4 RNA-binding domain; sequence RRLDNVVYRL…MKVPAILEAV (64 aa).

Belongs to the universal ribosomal protein uS4 family. As to quaternary structure, part of the 30S ribosomal subunit. Contacts protein S5. The interaction surface between S4 and S5 is involved in control of translational fidelity.

Functionally, one of the primary rRNA binding proteins, it binds directly to 16S rRNA where it nucleates assembly of the body of the 30S subunit. With S5 and S12 plays an important role in translational accuracy. The polypeptide is Small ribosomal subunit protein uS4 (Streptococcus agalactiae serotype Ia (strain ATCC 27591 / A909 / CDC SS700)).